The chain runs to 465 residues: Mothers against decapentaplegic homolog 1 (465 aa).

An N-acetylmethionine modification is found at Met-1. Positions 12 to 136 constitute an MH1 domain; it reads PAVKRLLGWK…YKRVESPVLP (125 aa). Positions 64, 109, 121, and 126 each coordinate Zn(2+). The tract at residues 162-248 is disordered; it reads NEPHMPLNAT…SQPMDTNMMA (87 aa). The span at 179–210 shows a compositional bias: low complexity; the sequence is PNSHPFPHSPNSSYPNSPGSSSSTYPHSPTSS. The segment covering 221 to 232 has biased composition (pro residues); it reads DTPPPAYLPPED. The MH2 domain maps to 271-465; the sequence is WCSIVYYELN…SPHNPISSVS (195 aa). Thr-322 carries the post-translational modification Phosphothreonine; by MINK1, TNIK and MAP4K4. The segment at 418–428 is L3 loop; it reads KGWGAEYHRQD. Phosphoserine occurs at positions 463 and 465.

It belongs to the dwarfin/SMAD family. In terms of assembly, found in a complex with SMAD4 and YY1. Interacts with HGS, NANOG and ZCCHC12. Upon C-terminus phosphorylation: forms trimers with another SMAD1 and the co-SMAD SMAD4. Interacts with PEBP2-alpha subunit, CREB-binding protein (CBP), p300, SMURF1, SMURF2, USP15 and HOXC8. Associates with ZNF423 or ZNF521 in response to BMP2 leading to activate transcription of BMP target genes. Interacts with SKOR1. Interacts (via MH2 domain) with LEMD3. Binding to LEMD3 results in at least a partial reduction of receptor-mediated phosphorylation. Forms a ternary complex with PSMB4 and OAZ1 before PSMB4 is incorporated into the 20S proteasome. Interacts (via MH2 domain) with FAM83G (via MH2 domain); in a SMAD4-independent manner. Interacts with ZC3H3. Interacts with TMEM119. Interacts (via MH1 and MH2 domains) with ZNF8. Interacts with RANBP3L; the interaction increases when SMAD1 is not phosphorylated and mediates SMAD1 nuclear export. Interacts with EGR1; this interaction inhibits SMAD1 dephosphorylation. Interacts with SMAD6. Interacts with YAP1. Interacts with MTMR4; negatively regulates BMP signaling through SMAD1 dephosphorylation and retention in endosomes. Post-translationally, phosphorylation of the C-terminal SVS motif by BMP type 1 receptor kinase activates SMAD1 by promoting dissociation from the receptor and trimerization with SMAD4. Phosphorylation by ERK2 MAP kinase in response to EGF or HGF prevents SMAD1 nuclear accumulation and transcriptional activity in response to BMP. Dephosphorylation, probably by PPM1A, induces its export from the nucleus to the cytoplasm. Dephosphorylation is inhibited by association with EGR1. Phosphorylation by CDK8/9 creates binding sites for YAP1, and subsequent phosphorylation by GSK3 switches off YAP1 binding and adds binding sites for SMURF1. In terms of processing, ubiquitinated by SMAD-specific E3 ubiquitin ligase SMURF1, leading to its degradation. Monoubiquitinated, leading to prevent DNA-binding. Deubiquitination by USP15 alleviates inhibition and promotes activation of TGF-beta target genes. Dephosphorylation, probably by PPM1A, induces its export from the nucleus to the cytoplasm. Phospho-SMAD1 is ubiquitinated by CHIP leading to disruption of the SMAD1-SMAD4 complex. In terms of tissue distribution, ubiquitous. Highest expression seen in the heart and skeletal muscle.

It localises to the cytoplasm. The protein localises to the nucleus. Functionally, transcriptional modulator that plays a role in various cellular processes, including embryonic development, cell differentiation, and tissue homeostasis. Upon BMP ligand binding to their receptors at the cell surface, is phosphorylated by activated type I BMP receptors (BMPRIs) and associates with SMAD4 to form a heteromeric complex which translocates into the nucleus acting as transcription factor. In turn, the hetero-trimeric complex recognizes cis-regulatory elements containing Smad Binding Elements (SBEs) to modulate the outcome of the signaling network. SMAD1/OAZ1/PSMB4 complex mediates the degradation of the CREBBP/EP300 repressor SNIP1. Positively regulates BMP4-induced expression of odontogenic development regulator MSX1 following IPO7-mediated nuclear import. The protein is Mothers against decapentaplegic homolog 1 (SMAD1) of Homo sapiens (Human).